The primary structure comprises 630 residues: DNA mismatch repair protein MutL (630 aa).

Disordered regions lie at residues 361 to 386 and 407 to 431; these read VLSSDIGGGEDATAPLAPLTGDAPAE and FERKQEEEVGEERCSPRLPTDGQAE. The segment covering 407–421 has biased composition (basic and acidic residues); that stretch reads FERKQEEEVGEERCS.

Belongs to the DNA mismatch repair MutL/HexB family.

In terms of biological role, this protein is involved in the repair of mismatches in DNA. It is required for dam-dependent methyl-directed DNA mismatch repair. May act as a 'molecular matchmaker', a protein that promotes the formation of a stable complex between two or more DNA-binding proteins in an ATP-dependent manner without itself being part of a final effector complex. In Geobacillus kaustophilus (strain HTA426), this protein is DNA mismatch repair protein MutL.